The primary structure comprises 1187 residues: Serine/threonine-protein kinase SIK3 homolog (1187 aa).

Over residues 1–15 (MAAVSSGAAAAAGIP) the composition is skewed to low complexity. Residues 1–41 (MAAVSSGAAAAAGIPNPNPNRERPQQQQQQQPASAALHPVA) form a disordered region. In terms of domain architecture, Protein kinase spans 59-310 (YEMERTIGKG…MEQICKNKWM (252 aa)). Residues 65-73 (IGKGNFAVV) and Lys88 each bind ATP. Residue Asp181 is the Proton acceptor of the active site. Thr214 bears the Phosphothreonine mark. Position 218 is a phosphoserine (Ser218). Residues 337–377 (LINEQVLMAMAEMGFDRERTLQSLHADSYDHYSATYSLLSD) form the UBA domain. Disordered stretches follow at residues 548 to 587 (LKRPRGQSPLVTSPHPIPAVAPVDEEGSDAEPDPEAVQRS), 697 to 776 (IQPS…PPGS), and 1060 to 1092 (CADAADAGMESDHNGYGSRSTQSDSYRPRGALQ). The segment covering 570 to 581 (VDEEGSDAEPDP) has biased composition (acidic residues). The span at 739–749 (VQYQHGSALYQ) shows a compositional bias: polar residues.

The protein belongs to the protein kinase superfamily. CAMK Ser/Thr protein kinase family. SNF1 subfamily. The cofactor is Mg(2+).

The enzyme catalyses L-seryl-[protein] + ATP = O-phospho-L-seryl-[protein] + ADP + H(+). It carries out the reaction L-threonyl-[protein] + ATP = O-phospho-L-threonyl-[protein] + ADP + H(+). This Danio rerio (Zebrafish) protein is Serine/threonine-protein kinase SIK3 homolog.